The chain runs to 291 residues: Pentonolactonase XacC (291 aa).

Positions 15, 141, and 191 each coordinate a divalent metal cation. Aspartate 191 (proton donor/acceptor) is an active-site residue.

It belongs to the SMP-30/CGR1 family. As to quaternary structure, monomer. A divalent metal cation serves as cofactor.

It carries out the reaction L-arabinono-1,4-lactone + H2O = L-arabinonate + H(+). It catalyses the reaction D-xylono-1,4-lactone + H2O = D-xylonate + H(+). Its pathway is carbohydrate degradation. Its function is as follows. Pentonolactonase involved in D-arabinose and D-xylose catabolism. Catalyzes the hydrolysis of both L-arabino-gamma-lactone and D-xylono-gamma-lactone to the corresponding acids. Can also hydrolyze D-galactono-gamma-lactone and D-glucono-delta-lactone. This chain is Pentonolactonase XacC, found in Haloferax volcanii (strain ATCC 29605 / DSM 3757 / JCM 8879 / NBRC 14742 / NCIMB 2012 / VKM B-1768 / DS2) (Halobacterium volcanii).